The sequence spans 111 residues: Disintegrin DS-AS (111 aa).

Residues 1 to 20 (MIQVLLVIICLAVFPYQGSC) form the signal peptide. Positions 21–47 (IILESGNVNDYEIVYPKKLIVLPTGAM) are excised as a propeptide. The region spanning 47-111 (MNSPHPCCDP…PDCPRNPYKD (65 aa)) is the Disintegrin domain. 4 cysteine pairs are disulfide-bonded: Cys53–Cys76, Cys67–Cys73, Cys72–Cys97, and Cys85–Cys104. Positions 89–91 (RGD) match the Cell attachment site motif.

In terms of assembly, heterodimer; disulfide-linked.

The protein resides in the secreted. Inhibits ADP-induced platelet aggregation in human platelet-rich plasma (IC(50) is 8 uM). The sequence is that of Disintegrin DS-AS from Atheris squamigera (Variable bush viper).